The chain runs to 1199 residues: Tubulin monoglutamylase TTLL4 (1199 aa).

A compositionally biased stretch (polar residues) spans Met-1–Ser-25. Disordered regions lie at residues Met-1–Pro-43, Ile-472–Asp-517, and Arg-525–Ser-544. Over residues Ser-477–Ile-495 the composition is skewed to basic and acidic residues. Residues Ala-506–Asp-517 show a composition bias toward acidic residues. The 344-residue stretch at Arg-604–Ser-947 folds into the TTL domain. Position 691 is a phosphoserine (Ser-691). Residues Lys-721, Arg-727–Gly-728, Gln-749–Leu-752, and Lys-762–Asp-764 each bind ATP. Residue Arg-727 coordinates a protein. Arg-788 is a binding site for L-glutamate. Thr-809 to Asn-810 serves as a coordination point for ATP. L-glutamate is bound by residues Tyr-811, Ser-812, and Lys-833. Mg(2+) contacts are provided by Asp-893, Glu-906, and Asn-908. A c-MTBD region region spans residues Pro-918–Ser-1029. An L-glutamate-binding site is contributed by Lys-924. Positions Gly-1130–Gly-1141 are enriched in polar residues. Positions Gly-1130 to Pro-1199 are disordered. Basic and acidic residues predominate over residues Ser-1151–Lys-1160. The span at Leu-1164 to Asp-1192 shows a compositional bias: polar residues.

The protein belongs to the tubulin--tyrosine ligase family. Requires Mg(2+) as cofactor.

Its subcellular location is the cytoplasm. The protein resides in the cell projection. It is found in the cilium. The protein localises to the cytoskeleton. It localises to the cilium basal body. It carries out the reaction L-glutamyl-[protein] + L-glutamate + ATP = gamma-L-glutamyl-L-glutamyl-[protein] + ADP + phosphate + H(+). Functionally, monoglutamylase which modifies both tubulin and non-tubulin proteins, adding a single glutamate on the gamma-carboxyl group of specific glutamate residues of target proteins. Involved in the side-chain initiation step of the polyglutamylation reaction but not in the elongation step. Preferentially modifies beta-tail tubulin over the alpha-tubulin. Monoglutamylates nucleosome assembly proteins NAP1L1 and NAP1L4. Monoglutamylates nucleotidyltransferase CGAS, leading to inhibition of CGAS catalytic activity, thereby preventing antiviral defense function. Involved in KLF4 glutamylation which impedes its ubiquitination, thereby leading to somatic cell reprogramming, pluripotency maintenance and embryogenesis. In Homo sapiens (Human), this protein is Tubulin monoglutamylase TTLL4.